The following is a 146-amino-acid chain: Monothiol glutaredoxin-5, mitochondrial (146 aa).

Residues 26-131 enclose the Glutaredoxin domain; the sequence is RQALEQAVKE…KILKEINALA (106 aa). Residue K43 participates in glutathione binding. Position 51 (C51) interacts with [2Fe-2S] cluster. Residues 83–87, I95, and 108–109 each bind glutathione; these read REGIK and SD.

Belongs to the glutaredoxin family. Monothiol subfamily. Homodimer. Interacts with ISA1 and ISA2.

Its subcellular location is the mitochondrion. In terms of biological role, monothiol glutaredoxin involved in mitochondrial iron-sulfur (Fe/S) cluster transfer. Receives 2Fe/2S clusters from scaffold protein isu1 and mediates their transfer to apoproteins, to the 4Fe/FS cluster biosynthesis machinery, or export from mitochondrion. The sequence is that of Monothiol glutaredoxin-5, mitochondrial from Schizosaccharomyces pombe (strain 972 / ATCC 24843) (Fission yeast).